We begin with the raw amino-acid sequence, 156 residues long: Endoribonuclease YbeY (156 aa).

Residues H122, H126, and H132 each contribute to the Zn(2+) site.

It belongs to the endoribonuclease YbeY family. Zn(2+) is required as a cofactor.

The protein resides in the cytoplasm. Its function is as follows. Single strand-specific metallo-endoribonuclease involved in late-stage 70S ribosome quality control and in maturation of the 3' terminus of the 16S rRNA. This Bacillus cereus (strain ATCC 14579 / DSM 31 / CCUG 7414 / JCM 2152 / NBRC 15305 / NCIMB 9373 / NCTC 2599 / NRRL B-3711) protein is Endoribonuclease YbeY.